The primary structure comprises 1384 residues: DNA-directed RNA polymerase subunit beta'' (1384 aa).

The Zn(2+) site is built by Cys224, Cys297, Cys304, and Cys307.

Belongs to the RNA polymerase beta' chain family. RpoC2 subfamily. As to quaternary structure, in plastids the minimal PEP RNA polymerase catalytic core is composed of four subunits: alpha, beta, beta', and beta''. When a (nuclear-encoded) sigma factor is associated with the core the holoenzyme is formed, which can initiate transcription. The cofactor is Zn(2+).

It localises to the plastid. The protein resides in the chloroplast. It carries out the reaction RNA(n) + a ribonucleoside 5'-triphosphate = RNA(n+1) + diphosphate. Functionally, DNA-dependent RNA polymerase catalyzes the transcription of DNA into RNA using the four ribonucleoside triphosphates as substrates. The sequence is that of DNA-directed RNA polymerase subunit beta'' from Sinapis alba (White mustard).